The sequence spans 335 residues: Dihydroorotate dehydrogenase (quinone) (335 aa).

FMN contacts are provided by residues 59-63 and T83; that span reads AGLDK. Position 63 (K63) interacts with substrate. Position 108 to 112 (108 to 112) interacts with substrate; that stretch reads NRMGF. Residues N136 and N169 each contribute to the FMN site. N169 contacts substrate. S172 acts as the Nucleophile in catalysis. N174 lines the substrate pocket. FMN-binding residues include K214 and T242. 243–244 serves as a coordination point for substrate; the sequence is NT. FMN is bound by residues G265, G294, and 315–316; that span reads YS.

The protein belongs to the dihydroorotate dehydrogenase family. Type 2 subfamily. As to quaternary structure, monomer. It depends on FMN as a cofactor.

Its subcellular location is the cell membrane. It catalyses the reaction (S)-dihydroorotate + a quinone = orotate + a quinol. Its pathway is pyrimidine metabolism; UMP biosynthesis via de novo pathway; orotate from (S)-dihydroorotate (quinone route): step 1/1. Catalyzes the conversion of dihydroorotate to orotate with quinone as electron acceptor. This is Dihydroorotate dehydrogenase (quinone) from Neisseria meningitidis serogroup B (strain ATCC BAA-335 / MC58).